We begin with the raw amino-acid sequence, 610 residues long: Pentatricopeptide repeat-containing protein At5g40400 (610 aa).

PPR repeat units follow at residues 165 to 199 (DPVV…GFSV), 200 to 234 (SVVT…GIHP), 235 to 269 (NTYT…GFEP), 270 to 304 (DLVT…RVVP), 305 to 339 (DLVT…GIKP), 340 to 374 (DCMS…SVVP), 375 to 409 (DRFT…KVDI), 410 to 445 (PFEV…GHEA), 446 to 480 (KPET…NQVL), 481 to 515 (DAKT…EVKP), 516 to 546 (DSFI…FAME), and 551 to 586 (DPES…GFVP).

The protein belongs to the PPR family. P subfamily.

This is Pentatricopeptide repeat-containing protein At5g40400 from Arabidopsis thaliana (Mouse-ear cress).